The chain runs to 544 residues: Chaperonin GroEL 1 (544 aa).

ATP is bound by residues 29-32, 86-90, Gly-413, 479-481, and Asp-495; these read TLGP, DGTTT, and NAA.

It belongs to the chaperonin (HSP60) family. Forms a cylinder of 14 subunits composed of two heptameric rings stacked back-to-back. Interacts with the co-chaperonin GroES.

The protein localises to the cytoplasm. It catalyses the reaction ATP + H2O + a folded polypeptide = ADP + phosphate + an unfolded polypeptide.. Together with its co-chaperonin GroES, plays an essential role in assisting protein folding. The GroEL-GroES system forms a nano-cage that allows encapsulation of the non-native substrate proteins and provides a physical environment optimized to promote and accelerate protein folding. In Parasynechococcus marenigrum (strain WH8102), this protein is Chaperonin GroEL 1.